Consider the following 236-residue polypeptide: Ubiquinone biosynthesis O-methyltransferase (236 aa).

The S-adenosyl-L-methionine site is built by arginine 39, glycine 59, aspartate 80, and methionine 124.

Belongs to the methyltransferase superfamily. UbiG/COQ3 family.

The enzyme catalyses a 3-demethylubiquinol + S-adenosyl-L-methionine = a ubiquinol + S-adenosyl-L-homocysteine + H(+). It carries out the reaction a 3-(all-trans-polyprenyl)benzene-1,2-diol + S-adenosyl-L-methionine = a 2-methoxy-6-(all-trans-polyprenyl)phenol + S-adenosyl-L-homocysteine + H(+). The protein operates within cofactor biosynthesis; ubiquinone biosynthesis. O-methyltransferase that catalyzes the 2 O-methylation steps in the ubiquinone biosynthetic pathway. This Shewanella sp. (strain W3-18-1) protein is Ubiquinone biosynthesis O-methyltransferase.